We begin with the raw amino-acid sequence, 544 residues long: Chaperonin GroEL 1 (544 aa).

ATP contacts are provided by residues 30–33, K51, 87–91, G415, and D494; these read TLGP and DGTTT.

This sequence belongs to the chaperonin (HSP60) family. Forms a cylinder of 14 subunits composed of two heptameric rings stacked back-to-back. Interacts with the co-chaperonin GroES.

It localises to the cytoplasm. The enzyme catalyses ATP + H2O + a folded polypeptide = ADP + phosphate + an unfolded polypeptide.. Together with its co-chaperonin GroES, plays an essential role in assisting protein folding. The GroEL-GroES system forms a nano-cage that allows encapsulation of the non-native substrate proteins and provides a physical environment optimized to promote and accelerate protein folding. This is Chaperonin GroEL 1 from Syntrophus aciditrophicus (strain SB).